The sequence spans 317 residues: Putative S-adenosyl-L-methionine-dependent methyltransferase MSMEG_0093 (317 aa).

S-adenosyl-L-methionine contacts are provided by residues D134 and 163-164; that span reads DL.

This sequence belongs to the UPF0677 family.

Exhibits S-adenosyl-L-methionine-dependent methyltransferase activity. In Mycolicibacterium smegmatis (strain ATCC 700084 / mc(2)155) (Mycobacterium smegmatis), this protein is Putative S-adenosyl-L-methionine-dependent methyltransferase MSMEG_0093.